The sequence spans 374 residues: Aminomethyltransferase (374 aa).

It belongs to the GcvT family. The glycine cleavage system is composed of four proteins: P, T, L and H.

It catalyses the reaction N(6)-[(R)-S(8)-aminomethyldihydrolipoyl]-L-lysyl-[protein] + (6S)-5,6,7,8-tetrahydrofolate = N(6)-[(R)-dihydrolipoyl]-L-lysyl-[protein] + (6R)-5,10-methylene-5,6,7,8-tetrahydrofolate + NH4(+). In terms of biological role, the glycine cleavage system catalyzes the degradation of glycine. The chain is Aminomethyltransferase from Prochlorococcus marinus (strain MIT 9313).